Consider the following 186-residue polypeptide: Akirin-1A (186 aa).

The tract at residues 14 to 65 is disordered; sequence EALMSPQSPKRRRCAPLPGSPATPSPQRCAIRPEMQQGQQQPLSQLGGDRRL. A compositionally biased stretch (low complexity) spans 49-60; that stretch reads QQGQQQPLSQLG. The SYVS motif motif lies at 183-186; sequence SYVS.

Belongs to the akirin family.

The protein resides in the nucleus. Its function is as follows. Molecular adapter that acts as a bridge between proteins, and which is involved skeletal muscle development. Functions as a signal transducer for MSTN during skeletal muscle regeneration and myogenesis. This is Akirin-1A (akirin1-a) from Xenopus laevis (African clawed frog).